A 306-amino-acid polypeptide reads, in one-letter code: Porphobilinogen deaminase (306 aa).

Cys-244 carries the S-(dipyrrolylmethanemethyl)cysteine modification.

This sequence belongs to the HMBS family. In terms of assembly, monomer. Requires dipyrromethane as cofactor.

The enzyme catalyses 4 porphobilinogen + H2O = hydroxymethylbilane + 4 NH4(+). It participates in porphyrin-containing compound metabolism; protoporphyrin-IX biosynthesis; coproporphyrinogen-III from 5-aminolevulinate: step 2/4. Functionally, tetrapolymerization of the monopyrrole PBG into the hydroxymethylbilane pre-uroporphyrinogen in several discrete steps. This Streptococcus sanguinis (strain SK36) protein is Porphobilinogen deaminase.